The chain runs to 243 residues: 3-deoxy-manno-octulosonate cytidylyltransferase (243 aa).

Belongs to the KdsB family.

It localises to the cytoplasm. It carries out the reaction 3-deoxy-alpha-D-manno-oct-2-ulosonate + CTP = CMP-3-deoxy-beta-D-manno-octulosonate + diphosphate. Its pathway is nucleotide-sugar biosynthesis; CMP-3-deoxy-D-manno-octulosonate biosynthesis; CMP-3-deoxy-D-manno-octulosonate from 3-deoxy-D-manno-octulosonate and CTP: step 1/1. It participates in bacterial outer membrane biogenesis; lipopolysaccharide biosynthesis. Its function is as follows. Activates KDO (a required 8-carbon sugar) for incorporation into bacterial lipopolysaccharide in Gram-negative bacteria. The polypeptide is 3-deoxy-manno-octulosonate cytidylyltransferase (Helicobacter pylori (strain G27)).